The sequence spans 149 residues: 3-dehydroquinate dehydratase (149 aa).

Tyr22 acts as the Proton acceptor in catalysis. The substrate site is built by Asn73, His79, and Asp86. Residue His99 is the Proton donor of the active site. Residues 100–101 (LS) and Arg110 contribute to the substrate site.

It belongs to the type-II 3-dehydroquinase family. Homododecamer.

It catalyses the reaction 3-dehydroquinate = 3-dehydroshikimate + H2O. It functions in the pathway metabolic intermediate biosynthesis; chorismate biosynthesis; chorismate from D-erythrose 4-phosphate and phosphoenolpyruvate: step 3/7. Catalyzes a trans-dehydration via an enolate intermediate. The sequence is that of 3-dehydroquinate dehydratase from Prochlorococcus marinus (strain MIT 9313).